The primary structure comprises 307 residues: NADH-ubiquinone oxidoreductase chain 2 (307 aa).

10 helical membrane passes run 1–21 (MTLQ…LSMT), 25–45 (WIII…YYML), 58–78 (YFLI…YIFV), 88–108 (FIFI…FWII), 119–139 (IGIV…HMGC), 144–164 (MLNL…LIGM), 193–213 (LFKY…FLYL), 217–237 (MSIS…LFIG), 250–270 (LWFI…VYYL), and 287–307 (HYKM…LFLT).

The protein belongs to the complex I subunit 2 family.

The protein localises to the mitochondrion inner membrane. The enzyme catalyses a ubiquinone + NADH + 5 H(+)(in) = a ubiquinol + NAD(+) + 4 H(+)(out). In terms of biological role, core subunit of the mitochondrial membrane respiratory chain NADH dehydrogenase (Complex I) that is believed to belong to the minimal assembly required for catalysis. Complex I functions in the transfer of electrons from NADH to the respiratory chain. The immediate electron acceptor for the enzyme is believed to be ubiquinone. The sequence is that of NADH-ubiquinone oxidoreductase chain 2 (ND2) from Albinaria caerulea (Land snail).